The following is a 130-amino-acid chain: MKRRTAREKALQALFQIDVSDIAPNDAIEHALDGEKTDAFFEQLVYGVIEHQVQLDEMISGHLVNWKLDRIANVDRAILRLAVYEMVYSDDIPANVSLNEAIELAKRFGDDKAAKFVNGVLSNIKTDIES.

It belongs to the NusB family.

In terms of biological role, involved in transcription antitermination. Required for transcription of ribosomal RNA (rRNA) genes. Binds specifically to the boxA antiterminator sequence of the ribosomal RNA (rrn) operons. This Bacillus velezensis (strain DSM 23117 / BGSC 10A6 / LMG 26770 / FZB42) (Bacillus amyloliquefaciens subsp. plantarum) protein is Transcription antitermination protein NusB.